The sequence spans 150 residues: 3-hydroxyacyl-[acyl-carrier-protein] dehydratase FabZ (150 aa).

Histidine 52 is an active-site residue.

It belongs to the thioester dehydratase family. FabZ subfamily.

It localises to the cytoplasm. It catalyses the reaction a (3R)-hydroxyacyl-[ACP] = a (2E)-enoyl-[ACP] + H2O. Involved in unsaturated fatty acids biosynthesis. Catalyzes the dehydration of short chain beta-hydroxyacyl-ACPs and long chain saturated and unsaturated beta-hydroxyacyl-ACPs. The protein is 3-hydroxyacyl-[acyl-carrier-protein] dehydratase FabZ of Albidiferax ferrireducens (strain ATCC BAA-621 / DSM 15236 / T118) (Rhodoferax ferrireducens).